We begin with the raw amino-acid sequence, 253 residues long: Trypsin delta (253 aa).

The signal sequence occupies residues 1–22 (MLKFVILLSAVACALGGTIPEG). A propeptide spans 23 to 30 (LLPQLDGR) (activation peptide). The Peptidase S1 domain maps to 31–253 (IVGGTATTIS…DLRAWVVRNA (223 aa)). The cysteines at positions 56 and 72 are disulfide-linked. Catalysis depends on charge relay system residues His-71 and Asp-116. 2 disulfide bridges follow: Cys-180–Cys-197 and Cys-206–Cys-230. Catalysis depends on Ser-210, which acts as the Charge relay system.

Belongs to the peptidase S1 family.

It is found in the secreted. The protein localises to the extracellular space. It catalyses the reaction Preferential cleavage: Arg-|-Xaa, Lys-|-Xaa.. The polypeptide is Trypsin delta (Drosophila erecta (Fruit fly)).